A 334-amino-acid chain; its full sequence is Ferric enterobactin transport system permease protein FepD (334 aa).

Topologically, residues 1–9 are periplasmic; the sequence is MSGSVAVTR. A helical transmembrane segment spans residues 10 to 30; sequence AIAVPGLLLLLIIATALSLLI. Residues 31–63 lie on the Cytoplasmic side of the membrane; sequence GAKSLPASVVLEAFSGTCQSADCTIVLDARLPR. A helical transmembrane segment spans residues 64–84; the sequence is TLAGLLAGGALGLAGALMQTL. Residues 85–92 lie on the Periplasmic side of the membrane; that stretch reads TRNPLADP. The chain crosses the membrane as a helical span at residues 93–113; sequence GLLGVNAGASFAIVLGAALFG. At 114–120 the chain is on the cytoplasmic side; it reads YSSAQEQ. The chain crosses the membrane as a helical span at residues 121-141; it reads LAMAFAGALVASLIVAFTGSQ. At 142-151 the chain is on the periplasmic side; that stretch reads GGGQLSPVRL. The chain crosses the membrane as a helical span at residues 152–172; it reads TLAGVALAAVLEGLTSGIALL. Topologically, residues 173 to 192 are cytoplasmic; that stretch reads NPDVYDQLRFWQAGSLDIRN. A helical transmembrane segment spans residues 193–213; the sequence is LHTLKVVLIPVLIAGATALLL. Residues 214–241 are Periplasmic-facing; sequence SRALNSLSLGSDTATALGSRVARTQLIG. A helical membrane pass occupies residues 242 to 262; sequence LLAITVLCGSATAIVGPIAFI. Residues 263 to 279 lie on the Cytoplasmic side of the membrane; the sequence is GLMMPHMARWLVGADHR. Residues 280-300 traverse the membrane as a helical segment; it reads WSLPVTLLATPALLLFADIIG. The Periplasmic segment spans residues 301–305; it reads RVIVP. Residues 306–326 form a helical membrane-spanning segment; that stretch reads GELRVSVVSAFIGAPVLIFLV. Topologically, residues 327 to 334 are cytoplasmic; that stretch reads RRKTRGGA.

It belongs to the binding-protein-dependent transport system permease family. FecCD subfamily. As to quaternary structure, the complex is composed of two ATP-binding proteins (FepC), two transmembrane proteins (FepD and FepG) and a solute-binding protein (FepB).

It is found in the cell inner membrane. Its function is as follows. Part of the ABC transporter complex FepBDGC involved in ferric enterobactin uptake. Responsible for the translocation of the substrate across the membrane. In Escherichia coli (strain K12), this protein is Ferric enterobactin transport system permease protein FepD (fepD).